The chain runs to 309 residues: Methionyl-tRNA formyltransferase (309 aa).

(6S)-5,6,7,8-tetrahydrofolate is bound at residue 109 to 112; the sequence is SLLP.

This sequence belongs to the Fmt family.

The catalysed reaction is L-methionyl-tRNA(fMet) + (6R)-10-formyltetrahydrofolate = N-formyl-L-methionyl-tRNA(fMet) + (6S)-5,6,7,8-tetrahydrofolate + H(+). Its function is as follows. Attaches a formyl group to the free amino group of methionyl-tRNA(fMet). The formyl group appears to play a dual role in the initiator identity of N-formylmethionyl-tRNA by promoting its recognition by IF2 and preventing the misappropriation of this tRNA by the elongation apparatus. This Clostridium perfringens (strain SM101 / Type A) protein is Methionyl-tRNA formyltransferase.